Here is a 304-residue protein sequence, read N- to C-terminus: Homoserine dehydrogenase (304 aa).

Residues tyrosine 8, asparagine 10, valine 11, arginine 38, arginine 39, and serine 73 each coordinate NADP(+). Tyrosine 8 is an NADPH binding site. Residues valine 11 and arginine 38 each coordinate NADPH. Residue valine 11 coordinates NAD(+). 4 residues coordinate NADPH: serine 73, serine 74, threonine 100, and lysine 102. An NAD(+)-binding site is contributed by serine 73. The NADP(+) site is built by threonine 100 and lysine 102. The Na(+) site is built by valine 129 and threonine 133. Residues glycine 182 and glutamate 185 each contribute to the NADP(+) site. The L-homoserine site is built by glutamate 185 and aspartate 196. The Proton donor role is filled by lysine 200. Glycine 284 is a binding site for NADP(+). An NADPH-binding site is contributed by glycine 284. Glycine 284 lines the NAD(+) pocket.

It belongs to the homoserine dehydrogenase family. Homodimer. The cofactor is a metal cation. Post-translationally, the enzyme is activated by reductive cleavage of the interchain disulfide bond between the two subunits.

It catalyses the reaction L-homoserine + NADP(+) = L-aspartate 4-semialdehyde + NADPH + H(+). The enzyme catalyses L-homoserine + NAD(+) = L-aspartate 4-semialdehyde + NADH + H(+). The protein operates within amino-acid biosynthesis; L-methionine biosynthesis via de novo pathway; L-homoserine from L-aspartate: step 3/3. Its pathway is amino-acid biosynthesis; L-threonine biosynthesis; L-threonine from L-aspartate: step 3/5. Inhibited by cysteine. Functionally, catalyzes the conversion of L-aspartate-beta-semialdehyde (L-Asa) to L-homoserine (L-Hse), the third step in the biosynthesis of threonine and methionine from aspartate. In Sulfurisphaera tokodaii (strain DSM 16993 / JCM 10545 / NBRC 100140 / 7) (Sulfolobus tokodaii), this protein is Homoserine dehydrogenase.